A 173-amino-acid chain; its full sequence is Ribosome maturation factor RimM (173 aa).

In terms of domain architecture, PRC barrel spans 95–173 (EGEYYWRQLE…LMVVDWDPDF (79 aa)).

The protein belongs to the RimM family. In terms of assembly, binds ribosomal protein uS19.

The protein localises to the cytoplasm. Functionally, an accessory protein needed during the final step in the assembly of 30S ribosomal subunit, possibly for assembly of the head region. Essential for efficient processing of 16S rRNA. May be needed both before and after RbfA during the maturation of 16S rRNA. It has affinity for free ribosomal 30S subunits but not for 70S ribosomes. This is Ribosome maturation factor RimM from Hahella chejuensis (strain KCTC 2396).